The sequence spans 442 residues: MSEIASLQDTIFALSSGRLPSGVAVVRISGPKVRFVLETIVGSIPTPRYAAYKLFRSRNGDPIDRGLALFFPGPNSFTGEDCAEFHLHGGKAVVEKLLSEMGELHGCRIAEAGEFTRRAFSNGKMDLTIAEGLADLIAAETEGQRRLALQVASGTQRELYTEWRQRLLRARAFIEAELDFADESDVPGSVSEQVWQSLALLKSEIENHIASGKRASMLRDGLHVVIVGAPNAGKSSLLNFLAGREVAIISEEAGTTRDLLEVKLDLGGIPVYVTDTAGLRETDSSVEKIGIERARARMADADLVLLLEDMNDPIAVASDEIPEALWKIGTKADLNAESADCWTYRISTKTGEGLDQLLTNLQNFAEEQIGQIEDAVPTRQRHINLLRSTVTEIDRAINGTNLPLELRAENMRLASQYLGRITGDVDVEEILDVIFSQFCIGK.

3 residues coordinate (6S)-5-formyl-5,6,7,8-tetrahydrofolate: Arg-27, Glu-84, and Lys-124. The 146-residue stretch at 221 to 366 folds into the TrmE-type G domain; the sequence is GLHVVIVGAP…LLTNLQNFAE (146 aa). GTP is bound by residues 231–236, 250–256, and 275–278; these read NAGKSS, SEEAGTT, and DTAG. 2 residues coordinate Mg(2+): Ser-235 and Thr-256. Lys-442 serves as a coordination point for (6S)-5-formyl-5,6,7,8-tetrahydrofolate.

Belongs to the TRAFAC class TrmE-Era-EngA-EngB-Septin-like GTPase superfamily. TrmE GTPase family. As to quaternary structure, homodimer. Heterotetramer of two MnmE and two MnmG subunits. It depends on K(+) as a cofactor.

Its subcellular location is the cytoplasm. Exhibits a very high intrinsic GTPase hydrolysis rate. Involved in the addition of a carboxymethylaminomethyl (cmnm) group at the wobble position (U34) of certain tRNAs, forming tRNA-cmnm(5)s(2)U34. This chain is tRNA modification GTPase MnmE, found in Brucella anthropi (strain ATCC 49188 / DSM 6882 / CCUG 24695 / JCM 21032 / LMG 3331 / NBRC 15819 / NCTC 12168 / Alc 37) (Ochrobactrum anthropi).